The following is a 141-amino-acid chain: ATP synthase epsilon chain (141 aa).

The protein belongs to the ATPase epsilon chain family. In terms of assembly, F-type ATPases have 2 components, CF(1) - the catalytic core - and CF(0) - the membrane proton channel. CF(1) has five subunits: alpha(3), beta(3), gamma(1), delta(1), epsilon(1). CF(0) has three main subunits: a, b and c.

Its subcellular location is the cell inner membrane. Produces ATP from ADP in the presence of a proton gradient across the membrane. In Burkholderia thailandensis (strain ATCC 700388 / DSM 13276 / CCUG 48851 / CIP 106301 / E264), this protein is ATP synthase epsilon chain.